A 505-amino-acid chain; its full sequence is Glutamyl-tRNA(Gln) amidotransferase subunit B, mitochondrial (505 aa).

The protein belongs to the GatB/GatE family. GatB subfamily. Subunit of the heterotrimeric GatCAB amidotransferase (AdT) complex, composed of A, B and C subunits.

The protein localises to the mitochondrion. The enzyme catalyses L-glutamyl-tRNA(Gln) + L-glutamine + ATP + H2O = L-glutaminyl-tRNA(Gln) + L-glutamate + ADP + phosphate + H(+). In terms of biological role, allows the formation of correctly charged Gln-tRNA(Gln) through the transamidation of misacylated Glu-tRNA(Gln) in the mitochondria. The reaction takes place in the presence of glutamine and ATP through an activated gamma-phospho-Glu-tRNA(Gln). The protein is Glutamyl-tRNA(Gln) amidotransferase subunit B, mitochondrial of Schizosaccharomyces japonicus (strain yFS275 / FY16936) (Fission yeast).